Here is a 702-residue protein sequence, read N- to C-terminus: Pentatricopeptide repeat-containing protein At4g16390, chloroplastic (702 aa).

The N-terminal 53 residues, 1–53 (MSFHHLCSSPSSLLHDPLPLCNLLSVYPKSTPRSFLSSYNPNSSHFHSRNLLQ), are a transit peptide targeting the chloroplast. 9 PPR repeats span residues 174–208 (EVILYNVTMKVFRKSKDLEKSEKLFDEMLERGIKP), 209–243 (DNATFTTIISCARQNGVPKRAVEWFEKMSSFGCEP), 244–278 (DNVTMAAMIDAYGRAGNVDMALSLYDRARTEKWRI), 279–313 (DAVTFSTLIRIYGVSGNYDGCLNIYEEMKALGVKP), 314–348 (NLVIYNRLIDSMGRAKRPWQAKIIYKDLITNGFTP), 349–383 (NWSTYAALVRAYGRARYGDDALAIYREMKEKGLSL), 384–414 (TVILYNTLLSMCADNRYVDEAFEIFQDMKNC), 420–454 (DSWTFSSLITVYACSGRVSEAEAALLQMREAGFEP), and 455–489 (TLFVLTSVIQCYGKAKQVDDVVRTFDQVLELGITP). Residues 603–688 (LHLKSLSLGA…WFLTTSVAAK (86 aa)) form the Smr domain.

This sequence belongs to the PPR family. P subfamily. As to expression, expressed in leaves and flowers and at lower levels in stems and flower buds.

The protein localises to the plastid. It localises to the chloroplast. Involved in chloroplast RNA processing. Can bind RNA. Involved in chloroplast development. Involved in chloroplast ribosomal RNA (rRNA) processing and/or translation. Required for FtsH-mediated chloroplast biogenesis. Involved in translation and accumulation of chloroplast ATP synthase subunits. This is Pentatricopeptide repeat-containing protein At4g16390, chloroplastic from Arabidopsis thaliana (Mouse-ear cress).